The primary structure comprises 562 residues: IRK-interacting protein (562 aa).

2 disordered regions span residues 29–61 (ASLM…RPLP) and 303–322 (VVSQ…SEMP). Positions 36 to 61 (SSPSSNYSLRNPSSSSAASPASRPLP) are enriched in low complexity. Residues 246-306 (SGVEKLKREL…LREATEVVSQ (61 aa)) are a coiled coil.

In terms of assembly, interacts with IRK. As to expression, highly expressed in root tips, shoot apices and developing flowers.

This chain is IRK-interacting protein, found in Arabidopsis thaliana (Mouse-ear cress).